A 470-amino-acid chain; its full sequence is GTPase grn1 (470 aa).

The span at 1-16 (MVSLKKKSKRRTTRLR) shows a compositional bias: basic residues. Residues 1-56 (MVSLKKKSKRRTTRLRSRIEKKAAESKRKQKRADKKNPQWKSRIPKDPGIPNSFPY) form a disordered region. Residues 17-27 (SRIEKKAAESK) show a composition bias toward basic and acidic residues. In terms of domain architecture, CP-type G spans 153–333 (DKEFKKVVEA…LVDSPGIVFP (181 aa)). Residues 202–205 (NKID), 276–283 (GYPNVGKS), and 326–329 (DSPG) each bind GTP. The segment at 405 to 415 (ARKRGRLGRGG) is RNA-binding.

It belongs to the TRAFAC class YlqF/YawG GTPase family.

The protein resides in the nucleus. It localises to the nucleolus. Its function is as follows. Required for optimal growth. Required for normal processing of ribosomal pre-rRNA. Required for nuclear export of ribosomal protein rpl2501. This chain is GTPase grn1, found in Schizosaccharomyces pombe (strain 972 / ATCC 24843) (Fission yeast).